Here is a 135-residue protein sequence, read N- to C-terminus: Photosystem II extrinsic protein U (135 aa).

Residues 1 to 29 (MKRLLSWLTGALLMAGLLAGLILPGSVHA) form the signal peptide.

It belongs to the PsbU family. PSII is composed of 1 copy each of membrane proteins PsbA, PsbB, PsbC, PsbD, PsbE, PsbF, PsbH, PsbI, PsbJ, PsbK, PsbL, PsbM, PsbT, PsbX, PsbY, Psb30/Ycf12, peripheral proteins PsbO, CyanoQ (PsbQ), PsbU, PsbV and a large number of cofactors. It forms dimeric complexes.

It is found in the cellular thylakoid membrane. Functionally, one of the extrinsic, lumenal subunits of photosystem II (PSII). PSII is a light-driven water plastoquinone oxidoreductase, using light energy to abstract electrons from H(2)O, generating a proton gradient subsequently used for ATP formation. The extrinsic proteins stabilize the structure of photosystem II oxygen-evolving complex (OEC), the ion environment of oxygen evolution and protect the OEC against heat-induced inactivation. This Parasynechococcus marenigrum (strain WH8102) protein is Photosystem II extrinsic protein U.